A 527-amino-acid chain; its full sequence is MGADNELSEFEKQRLANIAERDALLKKLTLDAQSAGLFPPKSARSSPGGLTKPKKKPAPKKVKKEDEDLVPRRMSSRLRGLAADSEVAKRKADEQYEAAQQAERAKRVRKSDAFSFSEMLVSGQKLSGDSLIGVDVVTKGVAMPYQRTFGDDDIKKTTDKELKALREEMSGLRLWEAWEPNRIKLTPERIYTMTFHPSEAKPLIFAGDKMGNLGVLDASQEKPISAVKQEDDEDAEDDDPDPVLTTLKPHTRTISSMHVHPSKPTHLYSASYDSSIRELDLEKTTSVEKYAPESTSDDIPISGIDMAPDDPNTLYWTTLDGAFGRYDTRASRRSAVATWQLSEKKIGGFSLFPTHPHFFATASLDRTMRLWDIRKLSHDEPVPVGEHVSRLSVSHAAFNSAGQIATSSYDDTLKIYDFGSKGIAAWKPGHTLSDAEMKPDTIVRHNCQTGRWVTILRPQWQANPQSPIQRFCIGNMNRFVDVYSSSGDQLAQLGGDGITAVPAVAVFHRSTNWIAGGTASGKICLWM.

Residues 35 to 90 (AGLFPPKSARSSPGGLTKPKKKPAPKKVKKEDEDLVPRRMSSRLRGLAADSEVAKR) form a disordered region. The span at 52–62 (KPKKKPAPKKV) shows a compositional bias: basic residues. WD repeat units follow at residues 185–226 (LTPE…PISA), 249–289 (PHTR…SVEK), 296–336 (SDDI…RSAV), 341–381 (LSEK…HDEP), 388–427 (VSRLSVSHAAFNSAGQIATSSYDDTLKIYDFGSKGIAAWK), 450–493 (GRWV…LAQL), and 496–527 (DGITAVPAVAVFHRSTNWIAGGTASGKICLWM). Residues 284–303 (TTSVEKYAPESTSDDIPISG) form a disordered region.

Belongs to the WD repeat DDB2/WDR76 family.

In terms of biological role, DNA-binding protein that binds to both single- and double-stranded DNA. Binds preferentially to UV-damaged DNA. May be involved in DNA-metabolic processes. The protein is DNA damage-binding protein cmr1 of Neosartorya fischeri (strain ATCC 1020 / DSM 3700 / CBS 544.65 / FGSC A1164 / JCM 1740 / NRRL 181 / WB 181) (Aspergillus fischerianus).